Reading from the N-terminus, the 197-residue chain is Imidazoleglycerol-phosphate dehydratase (197 aa).

Belongs to the imidazoleglycerol-phosphate dehydratase family.

Its subcellular location is the cytoplasm. It catalyses the reaction D-erythro-1-(imidazol-4-yl)glycerol 3-phosphate = 3-(imidazol-4-yl)-2-oxopropyl phosphate + H2O. It participates in amino-acid biosynthesis; L-histidine biosynthesis; L-histidine from 5-phospho-alpha-D-ribose 1-diphosphate: step 6/9. This chain is Imidazoleglycerol-phosphate dehydratase, found in Novosphingobium aromaticivorans (strain ATCC 700278 / DSM 12444 / CCUG 56034 / CIP 105152 / NBRC 16084 / F199).